A 94-amino-acid chain; its full sequence is MSEDKPKEGVKTENDHINLKVAGQDGSVVQFKIKRHTPLSKLMKAYCERQGLSIRQIRFRFDGQPINETDTPAQLEMEDEDTIDVFQQQTGGSC.

K11 is covalently cross-linked (Glycyl lysine isopeptide (Lys-Gly) (interchain with G-Cter in SUMO)). Positions 15–92 (DHINLKVAGQ…IDVFQQQTGG (78 aa)) constitute a Ubiquitin-like domain. Residue G92 forms a Glycyl lysine isopeptide (Gly-Lys) (interchain with K-? in acceptor proteins) linkage. The propeptide occupies 93-94 (SC).

It belongs to the ubiquitin family. SUMO subfamily. In terms of assembly, interacts with sae2 and ube2i. Covalently attached to a number of proteins. Post-translationally, polymeric chains can be formed through Lys-11 cross-linking. Cleavage of precursor form by a sentrin-specific protease is necessary for function.

It is found in the cytoplasm. It localises to the nucleus. Its subcellular location is the PML body. Functionally, ubiquitin-like protein which can be covalently attached to target lysines either as a monomer or as a lysine-linked polymer. Does not seem to be involved in protein degradation and may function as an antagonist of ubiquitin in the degradation process. Plays a role in a number of cellular processes such as nuclear transport, DNA replication and repair, mitosis and signal transduction. Covalent attachment to its substrates requires prior activation by the E1 complex sae1-sae2 and linkage to the E2 enzyme ube2i. The chain is Small ubiquitin-related modifier 3-like (sumo3l) from Danio rerio (Zebrafish).